Reading from the N-terminus, the 442-residue chain is tRNA-2-methylthio-N(6)-dimethylallyladenosine synthase (442 aa).

Positions 5–122 (KKVFIKTLGC…LPEMIKQKQK (118 aa)) constitute an MTTase N-terminal domain. Cys14, Cys51, Cys85, Cys159, Cys163, and Cys166 together coordinate [4Fe-4S] cluster. One can recognise a Radical SAM core domain in the interval 145–378 (KAEGAKAYVS…DLLNSNAQII (234 aa)). Residues 380–442 (RQMVGTNQRI…LPNSLRGELI (63 aa)) enclose the TRAM domain.

The protein belongs to the methylthiotransferase family. MiaB subfamily. As to quaternary structure, monomer. It depends on [4Fe-4S] cluster as a cofactor.

It is found in the cytoplasm. The enzyme catalyses N(6)-dimethylallyladenosine(37) in tRNA + (sulfur carrier)-SH + AH2 + 2 S-adenosyl-L-methionine = 2-methylsulfanyl-N(6)-dimethylallyladenosine(37) in tRNA + (sulfur carrier)-H + 5'-deoxyadenosine + L-methionine + A + S-adenosyl-L-homocysteine + 2 H(+). Functionally, catalyzes the methylthiolation of N6-(dimethylallyl)adenosine (i(6)A), leading to the formation of 2-methylthio-N6-(dimethylallyl)adenosine (ms(2)i(6)A) at position 37 in tRNAs that read codons beginning with uridine. In Francisella tularensis subsp. holarctica (strain LVS), this protein is tRNA-2-methylthio-N(6)-dimethylallyladenosine synthase.